We begin with the raw amino-acid sequence, 319 residues long: Acetyl-coenzyme A carboxylase carboxyl transferase subunit alpha (319 aa).

The CoA carboxyltransferase C-terminal domain maps to 39-293; that stretch reads RLQKKSNDLT…KAVLEKQLHE (255 aa).

It belongs to the AccA family. Acetyl-CoA carboxylase is a heterohexamer composed of biotin carboxyl carrier protein (AccB), biotin carboxylase (AccC) and two subunits each of ACCase subunit alpha (AccA) and ACCase subunit beta (AccD).

It is found in the cytoplasm. It carries out the reaction N(6)-carboxybiotinyl-L-lysyl-[protein] + acetyl-CoA = N(6)-biotinyl-L-lysyl-[protein] + malonyl-CoA. It functions in the pathway lipid metabolism; malonyl-CoA biosynthesis; malonyl-CoA from acetyl-CoA: step 1/1. Its function is as follows. Component of the acetyl coenzyme A carboxylase (ACC) complex. First, biotin carboxylase catalyzes the carboxylation of biotin on its carrier protein (BCCP) and then the CO(2) group is transferred by the carboxyltransferase to acetyl-CoA to form malonyl-CoA. The protein is Acetyl-coenzyme A carboxylase carboxyl transferase subunit alpha of Neisseria gonorrhoeae (strain ATCC 700825 / FA 1090).